Reading from the N-terminus, the 569-residue chain is Isochorismate synthase 1, chloroplastic (569 aa).

The transit peptide at 1 to 45 (MASLQFSSQFLGSNTKTHSSIISISRSYSPTPFTRFSRKKYESCS) directs the protein to the chloroplast.

It belongs to the isochorismate synthase family. In terms of assembly, monomer. Mg(2+) serves as cofactor. Leaves.

The protein localises to the plastid. Its subcellular location is the chloroplast. The catalysed reaction is chorismate = isochorismate. Its pathway is siderophore biosynthesis; salicylate biosynthesis. Isochorismate synthase involved in the synthesis of salicylic acid (SA) required for both local and systemic acquired resistance (LAR and SAR) while SA synthesized through the phenylalanine ammonium lyase (PAL) pathway seems to potentiate plant cell death. Also involved in phylloquinone (vitamin K1) synthesis. Has no isochorismate pyruvate lyase (IPL) activity. The chain is Isochorismate synthase 1, chloroplastic (ICS1) from Arabidopsis thaliana (Mouse-ear cress).